A 506-amino-acid chain; its full sequence is ATP-dependent rRNA helicase RRP3 (506 aa).

2 disordered regions span residues 1-22 (MSGKVDKKKGSSVKKTEGKSKE) and 37-88 (NQKK…FESF). Positions 49–69 (SDQEDDPSESEEEEGSDSEDV) are enriched in acidic residues. The Q motif signature appears at 86–114 (ESFSDLDLVPELIEACKNLNFAKPTPIQA). The Helicase ATP-binding domain maps to 117-289 (IPPALQGHDI…RASLTNPVKC (173 aa)). 130-137 (AQTGSGKT) is a binding site for ATP. A DEAD box motif is present at residues 236–239 (DEAD). One can recognise a Helicase C-terminal domain in the interval 312 to 460 (LKNTYLIYLM…KENVNKDAIL (149 aa)). Residues 485 to 506 (IARGKGRRGRMAARDDMDKGER) are disordered. A compositionally biased stretch (basic and acidic residues) spans 496–506 (AARDDMDKGER).

The protein belongs to the DEAD box helicase family. DDX47/RRP3 subfamily. As to quaternary structure, interacts with the SSU processome.

Its subcellular location is the nucleus. It carries out the reaction ATP + H2O = ADP + phosphate + H(+). In terms of biological role, ATP-dependent rRNA helicase required for pre-ribosomal RNA processing. Involved in the maturation of the 35S-pre-rRNA and to its cleavage to mature 18S rRNA. In Vanderwaltozyma polyspora (strain ATCC 22028 / DSM 70294 / BCRC 21397 / CBS 2163 / NBRC 10782 / NRRL Y-8283 / UCD 57-17) (Kluyveromyces polysporus), this protein is ATP-dependent rRNA helicase RRP3.